We begin with the raw amino-acid sequence, 1143 residues long: DNA polymerase III subunit alpha (1143 aa).

The protein belongs to the DNA polymerase type-C family. DnaE subfamily. As to quaternary structure, DNA polymerase III contains a core (composed of alpha, epsilon and theta chains) that associates with a tau subunit. This core dimerizes to form the PolIII' complex. PolIII' associates with the gamma complex (composed of gamma, delta, delta', psi and chi chains) and with the beta chain to form the complete DNA polymerase III complex.

Its subcellular location is the cytoplasm. The enzyme catalyses DNA(n) + a 2'-deoxyribonucleoside 5'-triphosphate = DNA(n+1) + diphosphate. Functionally, DNA polymerase III is a complex, multichain enzyme responsible for most of the replicative synthesis in bacteria. This DNA polymerase also exhibits 3' to 5' exonuclease activity. The alpha chain is the DNA polymerase. The chain is DNA polymerase III subunit alpha (dnaE1) from Caulobacter vibrioides (strain NA1000 / CB15N) (Caulobacter crescentus).